Reading from the N-terminus, the 126-residue chain is 3-aminobutyryl-CoA ammonia lyase (126 aa).

This sequence belongs to the KAL family. Homohexamer.

The catalysed reaction is (3S)-3-aminobutanoyl-CoA = (2E)-butenoyl-CoA + NH4(+). Its pathway is amino-acid degradation; L-lysine degradation via acetate pathway. In terms of biological role, involved in the anaerobic fermentation of lysine. Catalyzes the deamination of L-3-aminobutyryl-CoA to produce crotonoyl-CoA. The sequence is that of 3-aminobutyryl-CoA ammonia lyase from Acetoanaerobium sticklandii (strain ATCC 12662 / DSM 519 / JCM 1433 / CCUG 9281 / NCIMB 10654 / HF) (Clostridium sticklandii).